The sequence spans 90 residues: DNA/RNA-binding protein Alba (90 aa).

Lys8 bears the N6-acetyllysine mark.

This sequence belongs to the histone-like Alba family. Post-translationally, acetylated. Acetylation at Lys-8 decreases DNA-binding affinity.

It localises to the cytoplasm. The protein localises to the chromosome. In terms of biological role, binds double-stranded DNA tightly but without sequence specificity. Involved in DNA compaction. This Nanoarchaeum equitans (strain Kin4-M) protein is DNA/RNA-binding protein Alba.